The sequence spans 113 residues: Prefoldin subunit beta (113 aa).

The protein belongs to the prefoldin subunit beta family. Heterohexamer of two alpha and four beta subunits.

It localises to the cytoplasm. Functionally, molecular chaperone capable of stabilizing a range of proteins. Seems to fulfill an ATP-independent, HSP70-like function in archaeal de novo protein folding. In Methanococcus maripaludis (strain C6 / ATCC BAA-1332), this protein is Prefoldin subunit beta.